Consider the following 160-residue polypeptide: Transcription elongation factor GreA (160 aa).

Positions 1-72 (MAEKTYVMTL…QIQILETKIR (72 aa)) form a coiled coil.

This sequence belongs to the GreA/GreB family.

Its function is as follows. Necessary for efficient RNA polymerase transcription elongation past template-encoded arresting sites. The arresting sites in DNA have the property of trapping a certain fraction of elongating RNA polymerases that pass through, resulting in locked ternary complexes. Cleavage of the nascent transcript by cleavage factors such as GreA or GreB allows the resumption of elongation from the new 3'terminus. GreA releases sequences of 2 to 3 nucleotides. The protein is Transcription elongation factor GreA of Streptococcus thermophilus (strain CNRZ 1066).